Reading from the N-terminus, the 575-residue chain is Transcription factor E3 (575 aa).

Ser47 is modified (phosphoserine; by MTOR). The segment covering 90–126 (ATLSASSSAGGSRTPAMSSSSSSRVLLRQQLMRAQAQ) has biased composition (low complexity). Positions 90–153 (ATLSASSSAG…SPAPASPAIS (64 aa)) are disordered. Residues 127-136 (EQERRERREQ) are compositionally biased toward basic and acidic residues. Position 188 is an asymmetric dimethylarginine (Arg188). Positions 211 to 246 (LASQALTPPPGPASAQPLPAPEAAHTTGPTGSAPNS) are disordered. Positions 260 to 271 (EIDDVIDEIISL) are strong transcription activation domain. Ser321 carries the phosphoserine; by MTOR modification. Residue Lys339 forms a Glycyl lysine isopeptide (Lys-Gly) (interchain with G-Cter in SUMO2) linkage. The bHLH domain occupies 346-399 (QKKDNHNLIERRRRFNINDRIKELGTLIPKSSDPEMRWNKGTILKASVDYIRKL). The Nuclear localization signal signature appears at 356–359 (RRRR). Residues 409 to 430 (LESRQRSLEQANRSLQLRIQEL) form a leucine-zipper region. 2 disordered regions span residues 473 to 498 (GAAT…PPSD) and 534 to 575 (GGLS…EEES). The segment covering 539-575 (GALSPLRAASDPLLSSVSPAVSKASSRRSSFSMEEES) has biased composition (low complexity). Phosphoserine occurs at positions 542, 548, 554, 556, 560, and 568.

It belongs to the MiT/TFE family. As to quaternary structure, homodimer and heterodimer; with TFEB or MITF. Interacts with RRAGC/RagC GDP-bound and RRAGD/RagD GDP-bound; promoting its recruitment to lysosomal membrane in the presence of nutrients. Interacts with TSC22D1; the interaction is enhanced in the presence of TGF-beta. Sumoylated; does not affect dimerization with MITF. Post-translationally, phosphorylation ar Ser-47 and Ser-321 by MTOR via non-canonical mTORC1 pathway regulates its stability and subcellular location, respectively. When nutrients are present, phosphorylation by MTOR at Ser-47 promotes ubiquitination by the SCF(BTRC) complex, followed by degradation. When nutrients are present, phosphorylation by MTOR at Ser-321 also promotes association with 14-3-3/YWHA adapters and retention in the cytosol. Phosphorylation at Ser-47 plays a more critical role than phosphorylation at Ser-321 for TFE3 inactivation. Inhibition of mTORC1, starvation and lysosomal disruption, promotes dephosphorylation and transcription factor activity. In terms of processing, ubiquitinated by the SCF(BTRC) and SCF(FBXW11) complexes following phosphorylation at Ser-47 by MTOR, leading to its degradation by the proteasome. In terms of tissue distribution, ubiquitous in fetal and adult tissues.

The protein resides in the cytoplasm. The protein localises to the cytosol. It is found in the nucleus. It localises to the lysosome membrane. Functionally, transcription factor that acts as a master regulator of lysosomal biogenesis and immune response. Specifically recognizes and binds E-box sequences (5'-CANNTG-3'); efficient DNA-binding requires dimerization with itself or with another MiT/TFE family member such as TFEB or MITF. Involved in the cellular response to amino acid availability by acting downstream of MTOR: in the presence of nutrients, TFE3 phosphorylation by MTOR promotes its inactivation. Upon starvation or lysosomal stress, inhibition of MTOR induces TFE3 dephosphorylation, resulting in transcription factor activity. Specifically recognizes and binds the CLEAR-box sequence (5'-GTCACGTGAC-3') present in the regulatory region of many lysosomal genes, leading to activate their expression, thereby playing a central role in expression of lysosomal genes. Maintains the pluripotent state of embryonic stem cells by promoting the expression of genes such as ESRRB; mTOR-dependent TFE3 cytosolic retention and inactivation promotes exit from pluripotency. Required to maintain the naive pluripotent state of hematopoietic stem cell; mTOR-dependent cytoplasmic retention of TFE3 promotes the exit of hematopoietic stem cell from pluripotency. TFE3 activity is also involved in the inhibition of neuronal progenitor differentiation. Acts as a positive regulator of browning of adipose tissue by promoting expression of target genes; mTOR-dependent phosphorylation promotes cytoplasmic retention of TFE3 and inhibits browning of adipose tissue. In association with TFEB, activates the expression of CD40L in T-cells, thereby playing a role in T-cell-dependent antibody responses in activated CD4(+) T-cells and thymus-dependent humoral immunity. Specifically recognizes the MUE3 box, a subset of E-boxes, present in the immunoglobulin enhancer. It also binds very well to a USF/MLTF site. Promotes TGF-beta-induced transcription of COL1A2; via its interaction with TSC22D1 at E-boxes in the gene proximal promoter. May regulate lysosomal positioning in response to nutrient deprivation by promoting the expression of PIP4P1. The polypeptide is Transcription factor E3 (Homo sapiens (Human)).